Consider the following 249-residue polypeptide: Adenosylcobinamide-GDP ribazoletransferase (249 aa).

6 helical membrane-spanning segments follow: residues 36–56, 57–77, 106–126, 133–153, 188–208, and 226–246; these read LVGF…HSIG, LNLA…GGLH, VGAM…AFLF, KLTA…LAIT, LWLF…ITWL, and GALG…GQQI.

It belongs to the CobS family. The cofactor is Mg(2+).

The protein localises to the cell membrane. The enzyme catalyses alpha-ribazole + adenosylcob(III)inamide-GDP = adenosylcob(III)alamin + GMP + H(+). The catalysed reaction is alpha-ribazole 5'-phosphate + adenosylcob(III)inamide-GDP = adenosylcob(III)alamin 5'-phosphate + GMP + H(+). The protein operates within cofactor biosynthesis; adenosylcobalamin biosynthesis; adenosylcobalamin from cob(II)yrinate a,c-diamide: step 7/7. Functionally, joins adenosylcobinamide-GDP and alpha-ribazole to generate adenosylcobalamin (Ado-cobalamin). Also synthesizes adenosylcobalamin 5'-phosphate from adenosylcobinamide-GDP and alpha-ribazole 5'-phosphate. This Desulforamulus reducens (strain ATCC BAA-1160 / DSM 100696 / MI-1) (Desulfotomaculum reducens) protein is Adenosylcobinamide-GDP ribazoletransferase.